Here is a 157-residue protein sequence, read N- to C-terminus: Crossover junction endodeoxyribonuclease RuvC (157 aa).

Active-site residues include D7, E67, and D140. Mg(2+)-binding residues include D7, E67, and D140.

It belongs to the RuvC family. In terms of assembly, homodimer which binds Holliday junction (HJ) DNA. The HJ becomes 2-fold symmetrical on binding to RuvC with unstacked arms; it has a different conformation from HJ DNA in complex with RuvA. In the full resolvosome a probable DNA-RuvA(4)-RuvB(12)-RuvC(2) complex forms which resolves the HJ. The cofactor is Mg(2+).

It localises to the cytoplasm. It carries out the reaction Endonucleolytic cleavage at a junction such as a reciprocal single-stranded crossover between two homologous DNA duplexes (Holliday junction).. Functionally, the RuvA-RuvB-RuvC complex processes Holliday junction (HJ) DNA during genetic recombination and DNA repair. Endonuclease that resolves HJ intermediates. Cleaves cruciform DNA by making single-stranded nicks across the HJ at symmetrical positions within the homologous arms, yielding a 5'-phosphate and a 3'-hydroxyl group; requires a central core of homology in the junction. The consensus cleavage sequence is 5'-(A/T)TT(C/G)-3'. Cleavage occurs on the 3'-side of the TT dinucleotide at the point of strand exchange. HJ branch migration catalyzed by RuvA-RuvB allows RuvC to scan DNA until it finds its consensus sequence, where it cleaves and resolves the cruciform DNA. The protein is Crossover junction endodeoxyribonuclease RuvC of Rickettsia conorii (strain ATCC VR-613 / Malish 7).